The primary structure comprises 210 residues: Hydrogenase expression/formation protein HupD (210 aa).

E22, D68, and H99 together coordinate Ni(2+).

Belongs to the peptidase A31 family.

Functionally, not known. Could be involved in the processing of hydrogenase. The sequence is that of Hydrogenase expression/formation protein HupD (hupD) from Rhodobacter capsulatus (Rhodopseudomonas capsulata).